A 206-amino-acid chain; its full sequence is Outer-membrane lipoprotein carrier protein (206 aa).

The signal sequence occupies residues 1–21; that stretch reads MKKLLCAVLLSPLLYSNAVLA.

Belongs to the LolA family. In terms of assembly, monomer.

The protein resides in the periplasm. Its function is as follows. Participates in the translocation of lipoproteins from the inner membrane to the outer membrane. Only forms a complex with a lipoprotein if the residue after the N-terminal Cys is not an aspartate (The Asp acts as a targeting signal to indicate that the lipoprotein should stay in the inner membrane). The polypeptide is Outer-membrane lipoprotein carrier protein (Shewanella oneidensis (strain ATCC 700550 / JCM 31522 / CIP 106686 / LMG 19005 / NCIMB 14063 / MR-1)).